Consider the following 140-residue polypeptide: Profilin-1 (140 aa).

An N-acetylalanine modification is found at alanine 2. Residue serine 28 is modified to Phosphoserine. Lysine 54 participates in a covalent cross-link: Glycyl lysine isopeptide (Lys-Gly) (interchain with G-Cter in SUMO2); alternate. Lysine 54 is covalently cross-linked (Glycyl lysine isopeptide (Lys-Gly) (interchain with G-Cter in ubiquitin); alternate). Serine 57 carries the phosphoserine modification. At lysine 108 the chain carries N6-acetyllysine. Phosphotyrosine is present on tyrosine 129. Serine 138 carries the phosphoserine; by ROCK1 modification.

This sequence belongs to the profilin family. As to quaternary structure, found in a complex with XPO6, Ran, ACTB and PFN1. Interacts with ACTB. Interacts with VASP. Interacts with HTT. Interacts with SH3BGRL. Occurs in many kinds of cells as a complex with monomeric actin in a 1:1 ratio. Interacts with ACTMAP. In terms of processing, phosphorylation at Ser-138 reduces its affinity for G-actin and blocks its interaction with HTT, reducing its ability to inhibit androgen receptor (AR) and HTT aggregation.

The protein resides in the cytoplasm. Its subcellular location is the cytoskeleton. In terms of biological role, binds to actin and affects the structure of the cytoskeleton. At high concentrations, profilin prevents the polymerization of actin, whereas it enhances it at low concentrations. By binding to PIP2, it inhibits the formation of IP3 and DG. Inhibits androgen receptor (AR) and HTT aggregation and binding of G-actin is essential for its inhibition of AR. This chain is Profilin-1 (Pfn1), found in Mus musculus (Mouse).